A 483-amino-acid polypeptide reads, in one-letter code: MQTLNRRDFPGRSHPDKIIQFGEGNFLRAFVDWQIDLLNEHTDLNAGIVVIRPIDTDFPPSLSTQDGLYTAVIRGLNEQGEAVRESRLIRSVNREINIYRQFDDYLALARDANIRFMFSNTTEAGIAWNEADQFSDAPPSSFPAKLTRLLFERFEHFDGAADKGWVLLPCELIDYNGEALRELVLRYASHWQLPAAFTHWLTENNTFCSTLVDRIVTGYPRDEVAALQTELGYQDSFLDTAEYFYLFVIQGPQGLAQELRLDQLDLNVRIVDDIKPYKERKVAILNGAHTALVPVAYLSGLDTVGQTMDDAQISRFVEKTITEEIVPVLDLPEDELLSFSQAVLSRFRNPFIQHQLLSIALNGMTKFRTRILPQLLTYQQQKGQLPPRLTFALAALIAFYRGEREGQTYPLQDDAHWLERYSTLWNGVKHGDIALAELVNRVLSDANHWGQDLTAVPQLANQVTEQLQTILSRGMRAAVAAYS.

18 to 29 contributes to the NAD(+) binding site; it reads IIQFGEGNFLRA.

The protein belongs to the mannitol dehydrogenase family. UxaB subfamily.

The catalysed reaction is D-altronate + NAD(+) = keto-D-tagaturonate + NADH + H(+). It functions in the pathway carbohydrate metabolism; pentose and glucuronate interconversion. The polypeptide is Altronate oxidoreductase (Yersinia pestis).